Consider the following 248-residue polypeptide: Ubiquinone biosynthesis O-methyltransferase (248 aa).

S-adenosyl-L-methionine contacts are provided by arginine 40, glycine 71, aspartate 92, and methionine 135.

It belongs to the methyltransferase superfamily. UbiG/COQ3 family.

The catalysed reaction is a 3-demethylubiquinol + S-adenosyl-L-methionine = a ubiquinol + S-adenosyl-L-homocysteine + H(+). It carries out the reaction a 3-(all-trans-polyprenyl)benzene-1,2-diol + S-adenosyl-L-methionine = a 2-methoxy-6-(all-trans-polyprenyl)phenol + S-adenosyl-L-homocysteine + H(+). It functions in the pathway cofactor biosynthesis; ubiquinone biosynthesis. In terms of biological role, O-methyltransferase that catalyzes the 2 O-methylation steps in the ubiquinone biosynthetic pathway. This is Ubiquinone biosynthesis O-methyltransferase from Ruegeria pomeroyi (strain ATCC 700808 / DSM 15171 / DSS-3) (Silicibacter pomeroyi).